We begin with the raw amino-acid sequence, 247 residues long: Adenosine 5'-phosphosulfate reductase (247 aa).

4 residues coordinate [4Fe-4S] cluster: Cys-133, Cys-134, Cys-216, and Cys-219. A disordered region spans residues 222 to 247 (KPAPGSDPRSGRWAGASKTECGLHAS). The active-site Nucleophile; cysteine thiosulfonate intermediate is the Cys-242.

Belongs to the PAPS reductase family. CysH subfamily. The cofactor is [4Fe-4S] cluster.

It is found in the cytoplasm. It carries out the reaction [thioredoxin]-disulfide + sulfite + AMP + 2 H(+) = adenosine 5'-phosphosulfate + [thioredoxin]-dithiol. It functions in the pathway sulfur metabolism; hydrogen sulfide biosynthesis; sulfite from sulfate. Catalyzes the formation of sulfite from adenosine 5'-phosphosulfate (APS) using thioredoxin as an electron donor. The protein is Adenosine 5'-phosphosulfate reductase of Rhodococcus erythropolis (strain PR4 / NBRC 100887).